The sequence spans 266 residues: Methionine aminopeptidase (266 aa).

His80 serves as a coordination point for substrate. The a divalent metal cation site is built by Asp98, Asp109, and His172. A substrate-binding site is contributed by His179. A divalent metal cation contacts are provided by Glu206 and Glu237.

The protein belongs to the peptidase M24A family. Methionine aminopeptidase type 1 subfamily. As to quaternary structure, monomer. Co(2+) is required as a cofactor. It depends on Zn(2+) as a cofactor. Requires Mn(2+) as cofactor. Fe(2+) serves as cofactor.

It catalyses the reaction Release of N-terminal amino acids, preferentially methionine, from peptides and arylamides.. In terms of biological role, removes the N-terminal methionine from nascent proteins. The N-terminal methionine is often cleaved when the second residue in the primary sequence is small and uncharged (Met-Ala-, Cys, Gly, Pro, Ser, Thr, or Val). Requires deformylation of the N(alpha)-formylated initiator methionine before it can be hydrolyzed. This is Methionine aminopeptidase from Buchnera aphidicola subsp. Baizongia pistaciae (strain Bp).